The primary structure comprises 405 residues: 1-deoxy-D-xylulose 5-phosphate reductoisomerase (405 aa).

T16, G17, S18, I19, G42, R43, N44, and N130 together coordinate NADPH. K131 lines the 1-deoxy-D-xylulose 5-phosphate pocket. E132 lines the NADPH pocket. D156 provides a ligand contact to Mn(2+). S157, E158, S192, and H215 together coordinate 1-deoxy-D-xylulose 5-phosphate. E158 contacts Mn(2+). Residue G221 coordinates NADPH. The 1-deoxy-D-xylulose 5-phosphate site is built by S228, N233, K234, and E237. E237 provides a ligand contact to Mn(2+).

The protein belongs to the DXR family. Mg(2+) serves as cofactor. It depends on Mn(2+) as a cofactor.

It carries out the reaction 2-C-methyl-D-erythritol 4-phosphate + NADP(+) = 1-deoxy-D-xylulose 5-phosphate + NADPH + H(+). It functions in the pathway isoprenoid biosynthesis; isopentenyl diphosphate biosynthesis via DXP pathway; isopentenyl diphosphate from 1-deoxy-D-xylulose 5-phosphate: step 1/6. Functionally, catalyzes the NADPH-dependent rearrangement and reduction of 1-deoxy-D-xylulose-5-phosphate (DXP) to 2-C-methyl-D-erythritol 4-phosphate (MEP). This chain is 1-deoxy-D-xylulose 5-phosphate reductoisomerase, found in Pasteurella multocida (strain Pm70).